The sequence spans 288 residues: MSTDLDRPRLGSLFTRGHELPTAPARGEITLRARGLVVERRGGSGPARRVLDQVDFAVAAGEIVALVGPNGAGKSTLLAALAGELTPAAGGVELDGHPLTHWSPLDMARRRAVLPQTHTVGFPFTAREVVAMGRAPWVRTPRADHDDDLIAAAMAAADVTHLAGRAFPTLSGGECARVALARVLAQDTPTLLLDEPTAALDLGHQEAVLRLAADRARDGAAVVVVLHDLGIAAAYADRVAVLDSGRVAADGPPRAVLTTDLLTRVYQHPVEVLDHPVTGAQLVLPVRN.

Positions 31–269 constitute an ABC transporter domain; the sequence is LRARGLVVER…DLLTRVYQHP (239 aa). 68–75 provides a ligand contact to ATP; that stretch reads GPNGAGKS.

Belongs to the ABC transporter superfamily. Heme (hemin) importer (TC 3.A.1.14.5) family. In terms of assembly, the complex is composed of two ATP-binding proteins (HmuV), two transmembrane proteins (HmuU) and a solute-binding protein (HmuT).

It localises to the cell membrane. Part of the ABC transporter complex HmuTUV involved in hemin import. Responsible for energy coupling to the transport system. This is Hemin import ATP-binding protein HmuV from Nocardia farcinica (strain IFM 10152).